An 85-amino-acid chain; its full sequence is ATP synthase subunit c (85 aa).

The next 2 membrane-spanning stretches (helical) occupy residues 10-30 and 53-73; these read IAVS…FGIL and FIVA…ALLF.

Belongs to the ATPase C chain family. In terms of assembly, F-type ATPases have 2 components, F(1) - the catalytic core - and F(0) - the membrane proton channel. F(1) has five subunits: alpha(3), beta(3), gamma(1), delta(1), epsilon(1). F(0) has three main subunits: a(1), b(2) and c(10-14). The alpha and beta chains form an alternating ring which encloses part of the gamma chain. F(1) is attached to F(0) by a central stalk formed by the gamma and epsilon chains, while a peripheral stalk is formed by the delta and b chains.

Its subcellular location is the cell inner membrane. Functionally, f(1)F(0) ATP synthase produces ATP from ADP in the presence of a proton or sodium gradient. F-type ATPases consist of two structural domains, F(1) containing the extramembraneous catalytic core and F(0) containing the membrane proton channel, linked together by a central stalk and a peripheral stalk. During catalysis, ATP synthesis in the catalytic domain of F(1) is coupled via a rotary mechanism of the central stalk subunits to proton translocation. Key component of the F(0) channel; it plays a direct role in translocation across the membrane. A homomeric c-ring of between 10-14 subunits forms the central stalk rotor element with the F(1) delta and epsilon subunits. The polypeptide is ATP synthase subunit c (Idiomarina loihiensis (strain ATCC BAA-735 / DSM 15497 / L2-TR)).